The chain runs to 273 residues: MSLTNTKTGFSVKDILDLPDTNDEEGSVAEGPEEESEGPEPAKRAGPLGQGALDAVHSLPLKSPFYDSSDNPYTRWLASTEGLQYSLHGLAASAPPQDSSSKSPEPSADESPDNDKETPGGGGDAGKKRKRRVLFSKAQTYELERRFRQQRYLSAPEREHLASLIRLTPTQVKIWFQNHRYKMKRARAEKGMEVTPLPSPRCVAVPVLVRDGKPCHALKAQDLAAATFQAGIPFSAYSAQSLQHMQYNAQYSSASTPQYPTAHPLVQAQQWTW.

Disordered regions lie at residues 1–56 (MSLT…LDAV) and 91–131 (AASA…KRKR). Residues 20 to 38 (DTNDEEGSVAEGPEEESEG) are compositionally biased toward acidic residues. The homeobox DNA-binding region spans 128–187 (KRKRRVLFSKAQTYELERRFRQQRYLSAPEREHLASLIRLTPTQVKIWFQNHRYKMKRAR).

Belongs to the NK-2 homeobox family. Interacts with OLIG2.

The protein resides in the nucleus. Transcriptional activator involved in the development of insulin-producting beta cells in the endocrine pancreas. May also be involved in specifying diencephalic neuromeric boundaries, and in controlling the expression of genes that play a role in axonal guidance. Binds to elements within the NEUROD1 promoter. The sequence is that of Homeobox protein Nkx-2.2 (NKX2-2) from Mesocricetus auratus (Golden hamster).